We begin with the raw amino-acid sequence, 233 residues long: UPF0502 protein YpsIP31758_2048 (233 aa).

It belongs to the UPF0502 family.

This is UPF0502 protein YpsIP31758_2048 from Yersinia pseudotuberculosis serotype O:1b (strain IP 31758).